The sequence spans 171 residues: tRNA-specific adenosine deaminase (171 aa).

The 128-residue stretch at 6-133 (EEQTYFMQEA…ERLNHRVQVE (128 aa)) folds into the CMP/dCMP-type deaminase domain. Histidine 57 serves as a coordination point for Zn(2+). The Proton donor role is filled by glutamate 59. Zn(2+) is bound by residues cysteine 87 and cysteine 90.

The protein belongs to the cytidine and deoxycytidylate deaminase family. As to quaternary structure, homodimer. The cofactor is Zn(2+).

It catalyses the reaction adenosine(34) in tRNA + H2O + H(+) = inosine(34) in tRNA + NH4(+). Its function is as follows. Catalyzes the deamination of adenosine to inosine at the wobble position 34 of tRNA(Arg2). The polypeptide is tRNA-specific adenosine deaminase (Streptococcus pyogenes serotype M1).